Reading from the N-terminus, the 400-residue chain is Homoserine O-acetyltransferase (400 aa).

Residues 1–22 (MMNVHPVKGPVATGGERPHEAD) form a disordered region. The AB hydrolase-1 domain occupies 64-374 (NAILVCHALT…DKGHDAFLLD (311 aa)). Catalysis depends on Ser169, which acts as the Nucleophile. Residue Arg239 participates in substrate binding. Active-site residues include Asp335 and His368. Asp369 provides a ligand contact to substrate.

This sequence belongs to the AB hydrolase superfamily. MetX family. Homodimer.

The protein localises to the cytoplasm. The enzyme catalyses L-homoserine + acetyl-CoA = O-acetyl-L-homoserine + CoA. The protein operates within amino-acid biosynthesis; L-methionine biosynthesis via de novo pathway; O-acetyl-L-homoserine from L-homoserine: step 1/1. Functionally, transfers an acetyl group from acetyl-CoA to L-homoserine, forming acetyl-L-homoserine. The polypeptide is Homoserine O-acetyltransferase (Rhodopseudomonas palustris (strain HaA2)).